We begin with the raw amino-acid sequence, 305 residues long: Thymidylate synthase (305 aa).

Residues R26 and 160–161 (RR) each bind dUMP. C180 acts as the Nucleophile in catalysis. DUMP contacts are provided by residues 207-210 (RSCD), N218, and 248-250 (HLY). D210 provides a ligand contact to (6R)-5,10-methylene-5,6,7,8-tetrahydrofolate. A (6R)-5,10-methylene-5,6,7,8-tetrahydrofolate-binding site is contributed by A304.

This sequence belongs to the thymidylate synthase family. Bacterial-type ThyA subfamily. Homodimer.

It localises to the cytoplasm. The enzyme catalyses dUMP + (6R)-5,10-methylene-5,6,7,8-tetrahydrofolate = 7,8-dihydrofolate + dTMP. It participates in pyrimidine metabolism; dTTP biosynthesis. Functionally, catalyzes the reductive methylation of 2'-deoxyuridine-5'-monophosphate (dUMP) to 2'-deoxythymidine-5'-monophosphate (dTMP) while utilizing 5,10-methylenetetrahydrofolate (mTHF) as the methyl donor and reductant in the reaction, yielding dihydrofolate (DHF) as a by-product. This enzymatic reaction provides an intracellular de novo source of dTMP, an essential precursor for DNA biosynthesis. This is Thymidylate synthase from Sinorhizobium fredii (strain NBRC 101917 / NGR234).